Here is a 139-residue protein sequence, read N- to C-terminus: Large-conductance mechanosensitive channel (139 aa).

The next 3 helical transmembrane spans lie at 10–30, 40–60, and 80–100; these read FAVK…AAFG, VIMP…YYIA, and LAYG…FIIF.

The protein belongs to the MscL family. Homopentamer.

The protein resides in the cell inner membrane. In terms of biological role, channel that opens in response to stretch forces in the membrane lipid bilayer. May participate in the regulation of osmotic pressure changes within the cell. This Janthinobacterium sp. (strain Marseille) (Minibacterium massiliensis) protein is Large-conductance mechanosensitive channel.